The sequence spans 423 residues: Ferrochelatase, mitochondrial (423 aa).

A mitochondrion-targeting transit peptide spans 1–29 (MISRKIISTINSKTFYNKSLSYCTVNNNK). A [2Fe-2S] cluster-binding site is contributed by Cys-173. Residues His-207 and Asp-380 contribute to the active site. Residues Cys-401, Cys-404, and Cys-411 each contribute to the [2Fe-2S] cluster site.

This sequence belongs to the ferrochelatase family. As to quaternary structure, monomer. It depends on [2Fe-2S] cluster as a cofactor.

The protein localises to the mitochondrion inner membrane. The catalysed reaction is heme b + 2 H(+) = protoporphyrin IX + Fe(2+). It functions in the pathway porphyrin-containing compound metabolism; protoheme biosynthesis; protoheme from protoporphyrin-IX: step 1/1. Catalyzes the ferrous insertion into protoporphyrin IX. This Dictyostelium discoideum (Social amoeba) protein is Ferrochelatase, mitochondrial (hemH).